The chain runs to 517 residues: Perilipin-1 (517 aa).

Position 81 is a phosphoserine (Ser-81). Residue Thr-85 is modified to Phosphothreonine. Residues Ser-126, Ser-130, Ser-132, Ser-137, and Ser-174 each carry the phosphoserine modification. Residues Val-197–Ser-217 are disordered. Phosphothreonine occurs at positions 224, 299, and 301. Positions His-285 to Val-321 are disordered. Residues Lys-291–Leu-322 are required for interaction with CIDEC. The segment covering Thr-299 to Glu-319 has biased composition (acidic residues). Ser-315, Ser-385, Ser-387, Pro-408, Ser-411, Ser-434, Ser-436, Ser-440, Ser-460, Ser-492, and Ser-494 each carry phosphoserine. A disordered region spans residues Pro-415–Phe-495. The segment covering Pro-483 to Ser-492 has biased composition (basic and acidic residues).

This sequence belongs to the perilipin family. Interacts with ABHD5. Interacts with CIDEC. Interacts with AQP7. In terms of processing, major cAMP-dependent protein kinase substrate in adipocytes, also dephosphorylated by PP1. When phosphorylated, may be maximally sensitive to HSL. When unphosphorylated, may play a role in the inhibition of lipolysis, by acting as a barrier in lipid droplet. The N-terminus is blocked. In terms of tissue distribution, adipocytes.

The protein resides in the endoplasmic reticulum. The protein localises to the lipid droplet. Functionally, modulator of adipocyte lipid metabolism. Coats lipid storage droplets to protect them from breakdown by hormone-sensitive lipase (HSL). Its absence may result in leanness. Plays a role in unilocular lipid droplet formation by activating CIDEC. Their interaction promotes lipid droplet enlargement and directional net neutral lipid transfer. May modulate lipolysis and triglyceride levels. This Rattus norvegicus (Rat) protein is Perilipin-1 (Plin1).